A 453-amino-acid chain; its full sequence is Alpha-2B adrenergic receptor (453 aa).

Topologically, residues 1–17 (MSGPAMVHQEPYSVQAT) are extracellular. Residues 18–42 (AAIASAITFLILFTIFGNALVILAV) form a helical membrane-spanning segment. The Cytoplasmic segment spans residues 43-54 (LTSRSLRAPQNL). Residues 55 to 80 (FLVSLAAADILVATLIIPFSLANELL) traverse the membrane as a helical segment. At 81–90 (GYWYFWRAWC) the chain is on the extracellular side. C90 and C169 are disulfide-bonded. Residues 91–113 (EVYLALDVLFCTSSIVHLCAISL) form a helical membrane-spanning segment. The Cytoplasmic portion of the chain corresponds to 114–135 (DRYWAVSRALEYNSKRTPRRIK). Residues 136-158 (CIILTVWLIAAVISLPPLIYKGD) form a helical membrane-spanning segment. Topologically, residues 159-174 (QRPEPHGLPQCELNQE) are extracellular. A helical membrane pass occupies residues 175-198 (AWYILASSIGSFFAPCLIMILVYL). The Cytoplasmic segment spans residues 199-375 (RIYVIAKRSH…LSREKRFTFV (177 aa)). The segment at 214-329 (AKRGSGEGES…ASPASVFNPP (116 aa)) is disordered. Over residues 303–314 (AEEDEEEVEECE) the composition is skewed to acidic residues. A helical transmembrane segment spans residues 376–399 (LAVVIGVFVVCWFPFFFSYSLGAI). The Extracellular portion of the chain corresponds to 400-408 (CPQHCKVPH). The chain crosses the membrane as a helical span at residues 409-432 (GLFQFFFWIGYCNSSLNPVIYTIF). Topologically, residues 433-453 (NQDFRRAFRRILCRQWTQTGW) are cytoplasmic. C445 is lipidated: S-palmitoyl cysteine.

Belongs to the G-protein coupled receptor 1 family. Adrenergic receptor subfamily. ADRA2B sub-subfamily. Interacts with RAB26. Interacts with PPP1R9B. Interacts with GGA1, GGA2 and GGA3.

The protein localises to the cell membrane. Its function is as follows. Alpha-2 adrenergic receptors mediate the catecholamine-induced inhibition of adenylate cyclase through the action of G proteins. The sequence is that of Alpha-2B adrenergic receptor (Adra2b) from Mus musculus (Mouse).